The primary structure comprises 376 residues: MGTQGKVIRCKATVLWKPGAPLAIEEIEVAPPKAKEVRIKMVATGVCGTDIKHLDTQELSKFCPMIMGHEGVGIVESVGEGVSSVRTGDKVILLCIPQCGECKTCLNSKNNICTEIRLSKTHLASEGTSRITCKGKLVHQYIALGSFSEYTVLKEISVAKIDEGAPLEKVCIIGCGFATGYGAAINSAKVTPGSTCAVFGLGGVGLSVIIGCKAAGAARIIAVDINKDRFAKAKTVGATDCVDPRDFEKPIEEVLSDMIDGGVDFCFEVTGNTEAVGAALGSCHKDHGVCVTVGALASFTSTLSIRSHLFFSGRILKGSILGGWKTKEEIPKLVSDYMAKKFNIDPLITHTLTLSEANEAVQLMKSGQCIRCVLLL.

Positions 47, 69, 99, 102, 105, 113, and 175 each coordinate Zn(2+). Residues 200–205 (GLGGVG), D224, R229, 293–295 (VGA), and R371 each bind NAD(+).

Belongs to the zinc-containing alcohol dehydrogenase family. Class-V subfamily. As to quaternary structure, dimer. Requires Zn(2+) as cofactor.

Its subcellular location is the cytoplasm. The catalysed reaction is a primary alcohol + NAD(+) = an aldehyde + NADH + H(+). It carries out the reaction a secondary alcohol + NAD(+) = a ketone + NADH + H(+). Its function is as follows. Alcohol dehydrogenase. Catalyzes the NAD-dependent oxidation of primary alcohols to the corresponding aldehydes. Oxidizes secondary alcohols to the corresponding ketones. The sequence is that of Alcohol dehydrogenase 6 (Adh6) from Rattus norvegicus (Rat).